The following is a 153-amino-acid chain: ORM1-like protein 3 (153 aa).

An important for ceramide level-sensing region spans residues methionine 1–methionine 17. At methionine 1–glycine 21 the chain is on the cytoplasmic side. The next 2 membrane-spanning stretches (helical) occupy residues isoleucine 22–phenylalanine 42 and valine 43–phenylalanine 63. The Cytoplasmic portion of the chain corresponds to leucine 64–glutamine 94. The chain crosses the membrane as a helical span at residues phenylalanine 95–threonine 117. Over lysine 118–glutamine 121 the chain is Extracellular. A helical membrane pass occupies residues isoleucine 122 to leucine 142. Proline 137 carries the hydroxyproline modification. Over histidine 143–tyrosine 153 the chain is Cytoplasmic.

Belongs to the ORM family. As to quaternary structure, ceramide-sensitive subunit of the serine palmitoyltransferase (SPT) complex, which is also composed of SPTLC1, SPTLC2/3 and SPTSSA/B. In terms of processing, when hydroxylated at Pro-137, ubiquitinated via 'Lys-48'-linkage, leading to proteasomal degradation. In endothelial cells, ORMDL3 proteasomal degradation is controlled by the sphingosine 1-phosphate receptor signaling pathway.

Its subcellular location is the endoplasmic reticulum membrane. Its function is as follows. Plays an essential role in the homeostatic regulation of sphingolipid de novo biosynthesis by modulating the activity of the serine palmitoyltransferase (SPT) in response to ceramide levels. When complexed to SPT, the binding of ceramides to its N-terminus stabilizes a conformation that block SPT substrate entry, hence preventing SPT catalytic activity. Through this mechanism, maintains ceramide levels at sufficient concentrations for the production of complex sphingolipids, but which prevents the accumulation of ceramides to levels that trigger apoptosis. The sequence is that of ORM1-like protein 3 (ORMDL3) from Bos taurus (Bovine).